A 321-amino-acid polypeptide reads, in one-letter code: MIFITLEHILAHISFSLISVVTLAYWGTLVHQIEGLSSSGGKGMIVTFVCTTGLLITRWLYSGHLPLSNLYESFMFLSWSSSVIHIILEVRSQKDRGLGAITAPSTMLTHGFATSGLPKEMQQSAMLVPALQSHWLMMHVSMILLSYATLLCGSLSSIAFLIITFRRNRRILSLLSARDNSFIWPFPSRNNLYLHEQEKSDLQNTFYLSFTNHRKCKLTQQLDYWSYRVIGLGFLLLTIGILSGAVWANEAWGSRWSWDPKETWALITWIIFAIYLHTRVNKGWQDENPAIIASLGSFIVWICYLGVDLLGIGLHSYGWLI.

8 helical membrane-spanning segments follow: residues 1 to 21, 36 to 56, 70 to 90, 97 to 117, 143 to 163, 229 to 249, 256 to 276, and 290 to 310; these read MIFI…ISVV, LSSS…GLLI, LYES…ILEV, GLGA…TSGL, ILLS…FLII, VIGL…VWAN, WSWD…AIYL, and AIIA…VDLL.

This sequence belongs to the CcmF/CycK/Ccl1/NrfE/CcsA family. May interact with Ccs1.

It is found in the plastid. The protein localises to the chloroplast thylakoid membrane. Required during biogenesis of c-type cytochromes (cytochrome c6 and cytochrome f) at the step of heme attachment. In Cycas taitungensis (Prince sago), this protein is Cytochrome c biogenesis protein CcsA.